Reading from the N-terminus, the 148-residue chain is Deoxyuridine 5'-triphosphate nucleotidohydrolase (148 aa).

Residues 65–67, Asn-78, 82–84, and Lys-92 contribute to the substrate site; these read RSG and TID.

This sequence belongs to the dUTPase family. The cofactor is Mg(2+).

The catalysed reaction is dUTP + H2O = dUMP + diphosphate + H(+). Its pathway is pyrimidine metabolism; dUMP biosynthesis; dUMP from dCTP (dUTP route): step 2/2. In terms of biological role, this enzyme is involved in nucleotide metabolism: it produces dUMP, the immediate precursor of thymidine nucleotides and it decreases the intracellular concentration of dUTP so that uracil cannot be incorporated into DNA. This Chlorobium phaeovibrioides (strain DSM 265 / 1930) (Prosthecochloris vibrioformis (strain DSM 265)) protein is Deoxyuridine 5'-triphosphate nucleotidohydrolase.